A 254-amino-acid polypeptide reads, in one-letter code: RxLR effector protein CRE5 (254 aa).

Residues 1 to 19 (MQTIQLIIFVAFVLSRAAA) form the signal peptide. Asn49 carries N-linked (GlcNAc...) asparagine glycosylation. The RxLR-dEER motif lies at 53–63 (RSLRQHEGEDR). The Nudix hydrolase domain occupies 191-254 (SRWLSAGVVT…MEEGGVCRAL (64 aa)). A Nudix box motif is present at residues 228–249 (GGWDRGEKIKKAALREVMEEGG).

This sequence in the N-terminal section; belongs to the RxLR effector family. The protein in the C-terminal section; belongs to the Nudix hydrolase family.

It localises to the secreted. The protein localises to the host cytoplasm. It is found in the host nucleus. The protein resides in the host nucleolus. Effector that is involved in host plant infection. Contributes to virulence during the early infection stage, by inhibiting plant defense responses induced by both PAMP-triggered immunity (PTI) and effector-triggered immunity (ETI). The protein is RxLR effector protein CRE5 of Phytophthora infestans (strain T30-4) (Potato late blight agent).